The sequence spans 673 residues: Ribonucleoprotein PTB-binding 2 (673 aa).

The segment covering Met1–Pro17 has biased composition (gly residues). Residues Met1–Glu34 are disordered. A compositionally biased stretch (low complexity) spans Ser18–Ala29. 3 consecutive RRM domains span residues Arg58–Thr129, Ala131–Val209, and Lys220–Pro298. Positions Gln481 to Gln549 are disordered. The segment covering Ser499 to Ser512 has biased composition (low complexity). Over residues Thr529–Gln549 the composition is skewed to polar residues.

In terms of assembly, interacts with PTBP1 and RAVER1. As to expression, expressed throughout embryogenesis. Detected at low levels in adult lung, brain and kidney, but not in the other tissues tested.

It localises to the nucleus. The protein resides in the cytoplasm. Functionally, may bind single-stranded nucleic acids. The sequence is that of Ribonucleoprotein PTB-binding 2 (Raver2) from Mus musculus (Mouse).